We begin with the raw amino-acid sequence, 370 residues long: Phosphate acyltransferase (370 aa).

It belongs to the PlsX family. In terms of assembly, homodimer. Probably interacts with PlsY.

The protein localises to the cytoplasm. The catalysed reaction is a fatty acyl-[ACP] + phosphate = an acyl phosphate + holo-[ACP]. It functions in the pathway lipid metabolism; phospholipid metabolism. Its function is as follows. Catalyzes the reversible formation of acyl-phosphate (acyl-PO(4)) from acyl-[acyl-carrier-protein] (acyl-ACP). This enzyme utilizes acyl-ACP as fatty acyl donor, but not acyl-CoA. The polypeptide is Phosphate acyltransferase (Paracoccus denitrificans (strain Pd 1222)).